Reading from the N-terminus, the 105-residue chain is Protein yippee-like At4g27740 (105 aa).

A Yippee domain is found at 8 to 105 (PTYFCRNCEN…IEKLKLTKRY (98 aa)). Zn(2+) is bound by residues Cys12, Cys15, Cys68, and Cys71.

Belongs to the yippee family.

This Arabidopsis thaliana (Mouse-ear cress) protein is Protein yippee-like At4g27740.